Here is a 564-residue protein sequence, read N- to C-terminus: Kelch repeat and BTB domain-containing protein 1 (564 aa).

Residues 21 to 88 (CDINIVINDE…IYGIPLSLTN (68 aa)) form the BTB domain. A BACK domain is found at 123 to 219 (CIDFYIYADK…SLLSPQVIKS (97 aa)). 5 Kelch repeats span residues 252-297 (IELI…VLDN), 298-346 (IIYM…ADDE), 347-395 (YIYC…MLNG), 397-441 (IYVI…VHDG), and 442-492 (KIYI…STHN).

Interacts (via BTB domain) with host CUL3.

The protein resides in the host cytoplasm. In terms of biological role, probable substrate-specific adapter of CUL3-containing E3 ubiquitin-protein ligases which mediate the ubiquitination and subsequent proteasomal degradation of host target proteins. This chain is Kelch repeat and BTB domain-containing protein 1 (KBTB1), found in Bos taurus (Bovine).